Here is a 118-residue protein sequence, read N- to C-terminus: Large ribosomal subunit protein eL22 (118 aa).

Belongs to the eukaryotic ribosomal protein eL22 family.

This is Large ribosomal subunit protein eL22 (RPL22) from Tetrahymena thermophila (strain SB210).